Reading from the N-terminus, the 68-residue chain is uncharacterized protein (68 aa).

This is an uncharacterized protein from Escherichia coli (Bacteriophage T4).